A 167-amino-acid chain; its full sequence is uncharacterized protein (167 aa).

Belongs to the A.longa ORF167/ORF288 family.

Its subcellular location is the plastid. This is an uncharacterized protein from Euglena longa (Euglenophycean alga).